The chain runs to 101 residues: Small ribosomal subunit protein bS6 (101 aa).

This sequence belongs to the bacterial ribosomal protein bS6 family.

Its function is as follows. Binds together with bS18 to 16S ribosomal RNA. The polypeptide is Small ribosomal subunit protein bS6 (Oleidesulfovibrio alaskensis (strain ATCC BAA-1058 / DSM 17464 / G20) (Desulfovibrio alaskensis)).